The following is a 195-amino-acid chain: MLSWTVILTGIFMAYAVGSLAGGHFLSKILYNADVRQVGSGNAGTMNVLRNLGIAAGIMTFIWDTAKGFLVVTLGLKGGGAELGVLMALAAVAGHNWPLYWRFQGGKGLATSLGVALAVYPAAVPPGAALMGLLTFLTRNTDLATLLTFSALPIYFWWREGPGCYLAFGLGLAAIMLLRHGPLVISLFYNLKERR.

Transmembrane regions (helical) follow at residues 6 to 26, 52 to 72, 74 to 94, 117 to 137, and 168 to 188; these read VILTGIFMAYAVGSLAGGHFL, LGIAAGIMTFIWDTAKGFLVV, LGLKGGGAELGVLMALAAVAG, LAVYPAAVPPGAALMGLLTFL, and FGLGLAAIMLLRHGPLVISLF.

The protein belongs to the PlsY family. Probably interacts with PlsX.

The protein resides in the cell membrane. The enzyme catalyses an acyl phosphate + sn-glycerol 3-phosphate = a 1-acyl-sn-glycero-3-phosphate + phosphate. Its pathway is lipid metabolism; phospholipid metabolism. In terms of biological role, catalyzes the transfer of an acyl group from acyl-phosphate (acyl-PO(4)) to glycerol-3-phosphate (G3P) to form lysophosphatidic acid (LPA). This enzyme utilizes acyl-phosphate as fatty acyl donor, but not acyl-CoA or acyl-ACP. The protein is Glycerol-3-phosphate acyltransferase 1 of Moorella thermoacetica (strain ATCC 39073 / JCM 9320).